The chain runs to 245 residues: MVGNWKMNNTIAESVDLATAIAEKVGADGVQCEVGIAPTFPALYEVCKVIEWSGIRLCAQNCHYESDGPFTGEVSTRMLAAAGCSYVILGHSERRQLFGETNATVNLKVKKALAEGLSVILCVGETLDERERGVTGQIVTAQVVEGLIDVTDISKLVIAYEPVWAIGTGKTATKEQAQEVHALIRAKVTELYGQKAADHLRIQYGGSVKPSNAAELFAMPDIDGGLIGGASLNADDFMAIVEAAG.

4-6 (NWK) contacts substrate. The active-site Electrophile is the His91. Glu161 (proton acceptor) is an active-site residue. Residues Gly167, Ser207, and 228-229 (GG) each bind substrate.

This sequence belongs to the triosephosphate isomerase family. In terms of assembly, homodimer.

It is found in the cytoplasm. The enzyme catalyses D-glyceraldehyde 3-phosphate = dihydroxyacetone phosphate. It functions in the pathway carbohydrate biosynthesis; gluconeogenesis. It participates in carbohydrate degradation; glycolysis; D-glyceraldehyde 3-phosphate from glycerone phosphate: step 1/1. Its function is as follows. Involved in the gluconeogenesis. Catalyzes stereospecifically the conversion of dihydroxyacetone phosphate (DHAP) to D-glyceraldehyde-3-phosphate (G3P). The polypeptide is Triosephosphate isomerase (Chlorobaculum tepidum (strain ATCC 49652 / DSM 12025 / NBRC 103806 / TLS) (Chlorobium tepidum)).